The primary structure comprises 164 residues: Cyclic pyranopterin monophosphate synthase (164 aa).

Substrate contacts are provided by residues 73 to 75 (LCH) and 111 to 112 (ME). The active site involves Asp-126.

Belongs to the MoaC family. As to quaternary structure, homohexamer; trimer of dimers.

It carries out the reaction (8S)-3',8-cyclo-7,8-dihydroguanosine 5'-triphosphate = cyclic pyranopterin phosphate + diphosphate. It functions in the pathway cofactor biosynthesis; molybdopterin biosynthesis. Catalyzes the conversion of (8S)-3',8-cyclo-7,8-dihydroguanosine 5'-triphosphate to cyclic pyranopterin monophosphate (cPMP). This is Cyclic pyranopterin monophosphate synthase from Herpetosiphon aurantiacus (strain ATCC 23779 / DSM 785 / 114-95).